Reading from the N-terminus, the 88-residue chain is CLAVATA3/ESR (CLE)-related protein 42 (88 aa).

A signal peptide spans 1–24 (MRSPHITISLVFLFFLFLIIQTHQ). The tract at residues 69 to 88 (KMIGANEHGVPSGPNPISNR) is disordered. 2 positions are modified to hydroxyproline: Pro-79 and Pro-82. An O-linked (Ara...) hydroxyproline glycan is attached at Pro-82.

This sequence belongs to the CLV3/ESR signal peptide family. Post-translationally, the O-glycosylation (arabinosylation) of the hydroxyproline Pro-82 enhances binding affinity of the CLE42p peptide for its receptor. In terms of tissue distribution, expressed at low levels in seedlings, roots and inflorescence.

The protein localises to the secreted. It is found in the extracellular space. Functionally, extracellular signal peptide that regulates cell fate. Represses tracheary element differentiation but promotes the formation of procambial cells. This chain is CLAVATA3/ESR (CLE)-related protein 42, found in Arabidopsis thaliana (Mouse-ear cress).